The sequence spans 297 residues: Phosphatidylglycerol--prolipoprotein diacylglyceryl transferase (297 aa).

The next 4 membrane-spanning stretches (helical) occupy residues 20 to 40 (FLTI…GLFI), 58 to 78 (ILPS…VIFE), 104 to 124 (IAIW…FLCI), and 133 to 153 (IHLK…QSIG). Arg-154 lines the a 1,2-diacyl-sn-glycero-3-phospho-(1'-sn-glycerol) pocket. A run of 3 helical transmembrane segments spans residues 194–214 (TFIY…TIFY), 225–245 (GFIS…IEGL), and 266–286 (AQFI…FLRL).

Belongs to the Lgt family.

Its subcellular location is the cell inner membrane. It carries out the reaction L-cysteinyl-[prolipoprotein] + a 1,2-diacyl-sn-glycero-3-phospho-(1'-sn-glycerol) = an S-1,2-diacyl-sn-glyceryl-L-cysteinyl-[prolipoprotein] + sn-glycerol 1-phosphate + H(+). The protein operates within protein modification; lipoprotein biosynthesis (diacylglyceryl transfer). In terms of biological role, catalyzes the transfer of the diacylglyceryl group from phosphatidylglycerol to the sulfhydryl group of the N-terminal cysteine of a prolipoprotein, the first step in the formation of mature lipoproteins. The chain is Phosphatidylglycerol--prolipoprotein diacylglyceryl transferase from Prochlorococcus marinus subsp. pastoris (strain CCMP1986 / NIES-2087 / MED4).